Consider the following 338-residue polypeptide: Aspartate carbamoyltransferase catalytic subunit (338 aa).

Positions 59 and 60 each coordinate carbamoyl phosphate. Residue K87 participates in L-aspartate binding. 3 residues coordinate carbamoyl phosphate: R109, H142, and Q145. Positions 182 and 253 each coordinate L-aspartate. The carbamoyl phosphate site is built by G294 and P295.

Belongs to the aspartate/ornithine carbamoyltransferase superfamily. ATCase family. As to quaternary structure, heterododecamer (2C3:3R2) of six catalytic PyrB chains organized as two trimers (C3), and six regulatory PyrI chains organized as three dimers (R2).

The enzyme catalyses carbamoyl phosphate + L-aspartate = N-carbamoyl-L-aspartate + phosphate + H(+). Its pathway is pyrimidine metabolism; UMP biosynthesis via de novo pathway; (S)-dihydroorotate from bicarbonate: step 2/3. Catalyzes the condensation of carbamoyl phosphate and aspartate to form carbamoyl aspartate and inorganic phosphate, the committed step in the de novo pyrimidine nucleotide biosynthesis pathway. This chain is Aspartate carbamoyltransferase catalytic subunit, found in Prochlorococcus marinus subsp. pastoris (strain CCMP1986 / NIES-2087 / MED4).